Consider the following 356-residue polypeptide: Glutamine synthetase (356 aa).

The region spanning 19–99 is the GS beta-grasp domain; it reads IIAEYIWIGG…VMCDCYTPRG (81 aa). The region spanning 106–356 is the GS catalytic domain; sequence KRYNAAKILS…IAQTTILWKP (251 aa).

This sequence belongs to the glutamine synthetase family. In terms of assembly, homooctamer.

The protein resides in the cytoplasm. The catalysed reaction is L-glutamate + NH4(+) + ATP = L-glutamine + ADP + phosphate + H(+). In Hordeum vulgare (Barley), this protein is Glutamine synthetase.